Reading from the N-terminus, the 61-residue chain is Small ribosomal subunit protein uS14 (61 aa).

The Zn(2+) site is built by Cys24, Cys27, Cys40, and Cys43.

This sequence belongs to the universal ribosomal protein uS14 family. Zinc-binding uS14 subfamily. Part of the 30S ribosomal subunit. Contacts proteins S3 and S10. Requires Zn(2+) as cofactor.

Binds 16S rRNA, required for the assembly of 30S particles and may also be responsible for determining the conformation of the 16S rRNA at the A site. The protein is Small ribosomal subunit protein uS14 of Campylobacter fetus subsp. fetus (strain 82-40).